Consider the following 170-residue polypeptide: MAQIRIHEINTRIENEVEVSKFLQEEGVLYEKWNISKLPTHLKENYSLTDENKAEILAVFSKEIADVSARRGYKAHDVISLSNSTPNLDELLINFQKEHHHTDDEVRFIVSGHGIFAIEGKDGTFFDVELDPGDLISVPENARHYFTLQDDRQVVAIRIFVTTEGWVPIY.

Residues histidine 99, histidine 101, glutamate 105, and histidine 144 each contribute to the Fe(2+) site. Ni(2+) is bound by residues histidine 99, histidine 101, glutamate 105, and histidine 144.

It belongs to the acireductone dioxygenase (ARD) family. In terms of assembly, monomer. Requires Fe(2+) as cofactor. Ni(2+) serves as cofactor.

It catalyses the reaction 1,2-dihydroxy-5-(methylsulfanyl)pent-1-en-3-one + O2 = 3-(methylsulfanyl)propanoate + CO + formate + 2 H(+). The enzyme catalyses 1,2-dihydroxy-5-(methylsulfanyl)pent-1-en-3-one + O2 = 4-methylsulfanyl-2-oxobutanoate + formate + 2 H(+). The protein operates within amino-acid biosynthesis; L-methionine biosynthesis via salvage pathway; L-methionine from S-methyl-5-thio-alpha-D-ribose 1-phosphate: step 5/6. Its function is as follows. Catalyzes 2 different reactions between oxygen and the acireductone 1,2-dihydroxy-3-keto-5-methylthiopentene (DHK-MTPene) depending upon the metal bound in the active site. Fe-containing acireductone dioxygenase (Fe-ARD) produces formate and 2-keto-4-methylthiobutyrate (KMTB), the alpha-ketoacid precursor of methionine in the methionine recycle pathway. Ni-containing acireductone dioxygenase (Ni-ARD) produces methylthiopropionate, carbon monoxide and formate, and does not lie on the methionine recycle pathway. In Bacillus thuringiensis subsp. konkukian (strain 97-27), this protein is Acireductone dioxygenase.